The following is a 408-amino-acid chain: Putative mannan endo-1,4-beta-mannosidase P (408 aa).

An N-terminal signal peptide occupies residues 1–23; it reads MKCLCFIVLLAIVIAQSYVGVEA. N-linked (GlcNAc...) asparagine glycosylation is present at Asn73. Substrate-binding residues include Trp85 and Asn201. Catalysis depends on Glu202, which acts as the Proton donor. The active-site Nucleophile is Glu322. Trp364 is a substrate binding site.

This sequence belongs to the glycosyl hydrolase 5 (cellulase A) family.

The protein localises to the secreted. The catalysed reaction is Random hydrolysis of (1-&gt;4)-beta-D-mannosidic linkages in mannans, galactomannans and glucomannans.. The sequence is that of Putative mannan endo-1,4-beta-mannosidase P (MANP) from Arabidopsis thaliana (Mouse-ear cress).